We begin with the raw amino-acid sequence, 874 residues long: MSAKKLTGNEIRKKFLSFYAQREHTILPSASLVPEDPTVLLTIAGMLPFKPIFLGQQPRQYPRATTSQKCIRTNDIENVGRTARHHTFFEMLGNFSFGDYFKPEAIALAWELSTKIFALPPERLVVSVFREDDEAFAIWRDQIGIPAHRIQRMDEADNFWASGPTGPCGPCSEIYYDFHPELGDDHIDLEDDTRFIEFYNLVFMQYNRDANGNLTPLENRNIDTGMGLERMAQILQKVPNNYETDLIFPIIKTASDIADIDYRKSDDKTKVSLKVIGDHVRAVANLIADGVTASNVGRGYILRRLIRRVVRHGRLIGISGEFTSKVAETAITLAEDIYPNLRERETVIKAELQREESRFLETLERGEKLLAEIMAKPETKKTQHISGEDAFKLYDTYGFPLELTQEIAEENGLTVDVSMFDQEMKLAQIRSQSAHETIDLTAQDGVKLDIDKTQFLGYTDLSSPAQVMALVGDGEQLETVQAGAQVQIVLDKTPFYAESGGQIADRGYLSGDSLVVRIEDVQKQNNIFVHFGRIERGRLQLGMTVNAQIDGTCRRRAQANHTATHLLQAALRSLVDSSISQAGSLVSFDRLRFDFNCPRGLKPEEVEQVEAQVNSWIAEAHSATVAEMPLEVAKAKGAVAMFGEKYADVVRVVDYPGVSMELCGGTHVNNTAEIGVFKIISEAGISSGVRRIEAVAGLAVLDYLKVRDAVVKELSDRFKAKPEELSERVSNLQQELKDSQKQLEALKGELAVAKSDQLLGNAETVGEFQILVAEMPGVDAEALKTAAERLQQKLDESAVVLGSAAEGKVSLVAAFSKSVNGKGLQAGKFIGGIAKICGGGGGGRPNLAQAGGRDPSKLKEALESAKEQLVDGLK.

Zn(2+) is bound by residues histidine 561, histidine 565, cysteine 663, and histidine 667.

The protein belongs to the class-II aminoacyl-tRNA synthetase family. It depends on Zn(2+) as a cofactor.

Its subcellular location is the cytoplasm. It carries out the reaction tRNA(Ala) + L-alanine + ATP = L-alanyl-tRNA(Ala) + AMP + diphosphate. Catalyzes the attachment of alanine to tRNA(Ala) in a two-step reaction: alanine is first activated by ATP to form Ala-AMP and then transferred to the acceptor end of tRNA(Ala). Also edits incorrectly charged Ser-tRNA(Ala) and Gly-tRNA(Ala) via its editing domain. The protein is Alanine--tRNA ligase of Trichodesmium erythraeum (strain IMS101).